Reading from the N-terminus, the 415-residue chain is MATH domain and coiled-coil domain-containing protein At2g42465 (415 aa).

The MATH domain maps to 6 to 130 (RKALTLTVTN…NDRFNIEIYI (125 aa)). Residues 244–341 (FKLEWLKAKL…LLKDTYSDLK (98 aa)) adopt a coiled-coil conformation.

The polypeptide is MATH domain and coiled-coil domain-containing protein At2g42465 (Arabidopsis thaliana (Mouse-ear cress)).